The sequence spans 118 residues: Vacuolar ATPase assembly integral membrane protein vma-21 (118 aa).

Residues 1-35 (MATRRIISQEKTLLEKDDRIGSSPAASEKSNITPA) are Cytoplasmic-facing. A helical transmembrane segment spans residues 36–56 (VPASVIIKLLAFTFAMIVIPI). At 57 to 73 (SSYFLTVDRLFKGNSTY) the chain is on the lumenal side. Residues 74–94 (AGATAAIMANVVLIGYIIVAM) form a helical membrane-spanning segment. Over 95–118 (AEDQSDQENEKKGGGGKGEGKKDL) the chain is Cytoplasmic. The interval 98 to 118 (QSDQENEKKGGGGKGEGKKDL) is disordered. The segment covering 102-118 (ENEKKGGGGKGEGKKDL) has biased composition (basic and acidic residues). The Prevents secretion from ER signature appears at 115 to 118 (KKDL).

The protein belongs to the VMA21 family.

The protein localises to the endoplasmic reticulum membrane. It is found in the endoplasmic reticulum-Golgi intermediate compartment membrane. The protein resides in the cytoplasmic vesicle. Its subcellular location is the COPII-coated vesicle membrane. Functionally, required for the assembly of the V0 complex of the vacuolar ATPase (V-ATPase) in the endoplasmic reticulum. In Neurospora crassa (strain ATCC 24698 / 74-OR23-1A / CBS 708.71 / DSM 1257 / FGSC 987), this protein is Vacuolar ATPase assembly integral membrane protein vma-21 (vma-21).